The chain runs to 114 residues: Protein yippee-like (114 aa).

The region spanning 14–111 is the Yippee domain; sequence RTYSCVHCRA…IELAHMIKEN (98 aa). 4 residues coordinate Zn(2+): Cys18, Cys21, Cys74, and Cys77.

This sequence belongs to the yippee family.

In terms of biological role, involved in regulating synaptic transmission in presynaptic neurons. In class IV dendritic arborization neurons (nociceptors), involved in regulating activation of their second-order neurons (SONs) and maintaining synaptic contact between nociceptors and their SONs. This chain is Protein yippee-like, found in Drosophila melanogaster (Fruit fly).